Reading from the N-terminus, the 815-residue chain is Phenylalanine--tRNA ligase beta subunit (815 aa).

Residues 40–155 enclose the tRNA-binding domain; the sequence is APPFDKIVVA…EDAPVGQNIR (116 aa). A B5 domain is found at 406 to 485; it reads PQRRPVSLRL…RIYGFERIAA (80 aa). The Mg(2+) site is built by aspartate 463, aspartate 469, glutamate 472, and glutamate 473. In terms of domain architecture, FDX-ACB spans 712-814; sequence SKFPAAVRDL…LGEAFQARLR (103 aa).

Belongs to the phenylalanyl-tRNA synthetase beta subunit family. Type 1 subfamily. Tetramer of two alpha and two beta subunits. It depends on Mg(2+) as a cofactor.

It is found in the cytoplasm. The catalysed reaction is tRNA(Phe) + L-phenylalanine + ATP = L-phenylalanyl-tRNA(Phe) + AMP + diphosphate + H(+). The chain is Phenylalanine--tRNA ligase beta subunit from Cupriavidus pinatubonensis (strain JMP 134 / LMG 1197) (Cupriavidus necator (strain JMP 134)).